The primary structure comprises 267 residues: Small ribosomal subunit protein uS3 (267 aa).

The region spanning 43 to 111 (IRKEMSKDLE…QVQLNIFEVK (69 aa)) is the KH type-2 domain. The tract at residues 216-267 (FEEQQAQQNNRPGRRGGDRRPRRGNRSAAPQAAEAPKAEAPAEAAPAAETKE) is disordered. Low complexity predominate over residues 241-267 (RSAAPQAAEAPKAEAPAEAAPAAETKE).

The protein belongs to the universal ribosomal protein uS3 family. As to quaternary structure, part of the 30S ribosomal subunit. Forms a tight complex with proteins S10 and S14.

Functionally, binds the lower part of the 30S subunit head. Binds mRNA in the 70S ribosome, positioning it for translation. The protein is Small ribosomal subunit protein uS3 of Bifidobacterium longum (strain DJO10A).